A 385-amino-acid polypeptide reads, in one-letter code: Tetraacyldisaccharide 4'-kinase (385 aa).

60 to 67 (TVGGSGKT) provides a ligand contact to ATP.

The protein belongs to the LpxK family.

The enzyme catalyses a lipid A disaccharide + ATP = a lipid IVA + ADP + H(+). Its pathway is glycolipid biosynthesis; lipid IV(A) biosynthesis; lipid IV(A) from (3R)-3-hydroxytetradecanoyl-[acyl-carrier-protein] and UDP-N-acetyl-alpha-D-glucosamine: step 6/6. In terms of biological role, transfers the gamma-phosphate of ATP to the 4'-position of a tetraacyldisaccharide 1-phosphate intermediate (termed DS-1-P) to form tetraacyldisaccharide 1,4'-bis-phosphate (lipid IVA). This Psychrobacter arcticus (strain DSM 17307 / VKM B-2377 / 273-4) protein is Tetraacyldisaccharide 4'-kinase.